A 124-amino-acid polypeptide reads, in one-letter code: S-adenosylmethionine decarboxylase proenzyme (124 aa).

The Schiff-base intermediate with substrate; via pyruvic acid role is filled by Ser63. Ser63 carries the pyruvic acid (Ser); by autocatalysis modification. The Proton acceptor; for processing activity role is filled by His68. The Proton donor; for catalytic activity role is filled by Cys83.

It belongs to the prokaryotic AdoMetDC family. Type 1 subfamily. Heterotetramer of two alpha and two beta chains arranged as a dimer of alpha/beta heterodimers. Pyruvate serves as cofactor. In terms of processing, is synthesized initially as an inactive proenzyme. Formation of the active enzyme involves a self-maturation process in which the active site pyruvoyl group is generated from an internal serine residue via an autocatalytic post-translational modification. Two non-identical subunits are generated from the proenzyme in this reaction, and the pyruvate is formed at the N-terminus of the alpha chain, which is derived from the carboxyl end of the proenzyme. The post-translation cleavage follows an unusual pathway, termed non-hydrolytic serinolysis, in which the side chain hydroxyl group of the serine supplies its oxygen atom to form the C-terminus of the beta chain, while the remainder of the serine residue undergoes an oxidative deamination to produce ammonia and the pyruvoyl group blocking the N-terminus of the alpha chain.

The enzyme catalyses S-adenosyl-L-methionine + H(+) = S-adenosyl 3-(methylsulfanyl)propylamine + CO2. The protein operates within amine and polyamine biosynthesis; S-adenosylmethioninamine biosynthesis; S-adenosylmethioninamine from S-adenosyl-L-methionine: step 1/1. Functionally, catalyzes the decarboxylation of S-adenosylmethionine to S-adenosylmethioninamine (dcAdoMet), the propylamine donor required for the synthesis of the polyamines spermine and spermidine from the diamine putrescine. The sequence is that of S-adenosylmethionine decarboxylase proenzyme from Acetivibrio thermocellus (strain ATCC 27405 / DSM 1237 / JCM 9322 / NBRC 103400 / NCIMB 10682 / NRRL B-4536 / VPI 7372) (Clostridium thermocellum).